The chain runs to 497 residues: Glycerol kinase (497 aa).

T12 lines the ADP pocket. Residues T12, T13, and S14 each contribute to the ATP site. A sn-glycerol 3-phosphate-binding site is contributed by T12. R16 contacts ADP. Residues R82, E83, Y132, and D239 each coordinate sn-glycerol 3-phosphate. Positions 82, 83, 132, 239, and 240 each coordinate glycerol. 2 residues coordinate ADP: T261 and G303. ATP is bound by residues T261, G303, Q307, and G402. Positions 402 and 406 each coordinate ADP.

Belongs to the FGGY kinase family. Homodimer.

The catalysed reaction is glycerol + ATP = sn-glycerol 3-phosphate + ADP + H(+). Its pathway is polyol metabolism; glycerol degradation via glycerol kinase pathway; sn-glycerol 3-phosphate from glycerol: step 1/1. Functionally, key enzyme in the regulation of glycerol uptake and metabolism. Catalyzes the phosphorylation of glycerol to yield sn-glycerol 3-phosphate. Can utilize other nucleoside triphosphates (GTP, CTP, UTP and ITP) as a phosphoryl donor. This is Glycerol kinase from Thermococcus kodakarensis (strain ATCC BAA-918 / JCM 12380 / KOD1) (Pyrococcus kodakaraensis (strain KOD1)).